The sequence spans 342 residues: DNA primase small subunit PriS (342 aa).

Residues D97, D99, and D236 contribute to the active site.

It belongs to the eukaryotic-type primase small subunit family. Heterodimer of a small subunit (PriS) and a large subunit (PriL). Requires Mg(2+) as cofactor. It depends on Mn(2+) as a cofactor.

In terms of biological role, catalytic subunit of DNA primase, an RNA polymerase that catalyzes the synthesis of short RNA molecules used as primers for DNA polymerase during DNA replication. The small subunit contains the primase catalytic core and has DNA synthesis activity on its own. Binding to the large subunit stabilizes and modulates the activity, increasing the rate of DNA synthesis while decreasing the length of the DNA fragments, and conferring RNA synthesis capability. The DNA polymerase activity may enable DNA primase to also catalyze primer extension after primer synthesis. May also play a role in DNA repair. The chain is DNA primase small subunit PriS from Aeropyrum pernix (strain ATCC 700893 / DSM 11879 / JCM 9820 / NBRC 100138 / K1).